The following is a 459-amino-acid chain: Sorting nexin-8 (459 aa).

Residues 1 to 53 (MTGGAMDPLPTAPGAAAAEAEVDEEADPPAADSPVPPVSEPRAPDAGQMQVPP) form a disordered region. The 109-residue stretch at 68–176 (ARDAVQVELV…KLFLSFSGPD (109 aa)) folds into the PX domain. A 1,2-diacyl-sn-glycero-3-phospho-(1D-myo-inositol-3-phosphate) is bound by residues Arg-104, Lys-130, and Arg-143.

It belongs to the sorting nexin family.

The protein resides in the early endosome membrane. Its function is as follows. May be involved in several stages of intracellular trafficking. May play a role in intracellular protein transport from early endosomes to the trans-Golgi network. The polypeptide is Sorting nexin-8 (SNX8) (Bos taurus (Bovine)).